Consider the following 129-residue polypeptide: Large ribosomal subunit protein bL20 (129 aa).

The protein belongs to the bacterial ribosomal protein bL20 family.

In terms of biological role, binds directly to 23S ribosomal RNA and is necessary for the in vitro assembly process of the 50S ribosomal subunit. It is not involved in the protein synthesizing functions of that subunit. The sequence is that of Large ribosomal subunit protein bL20 from Mycolicibacterium smegmatis (strain ATCC 700084 / mc(2)155) (Mycobacterium smegmatis).